The primary structure comprises 284 residues: Ribosome-associated protein oga1 (284 aa).

The disordered stretch occupies residues 1–284 (MSVASKNLFD…LSETDFPALA (284 aa)). The span at 22–36 (TEKKTAASRDKKRSD) shows a compositional bias: basic and acidic residues. Phosphoserine is present on residues Ser37 and Ser51. Basic and acidic residues-rich tracts occupy residues 52–73 (RKRD…ADQP) and 119–141 (GREF…ERGW). Thr160 carries the post-translational modification Phosphothreonine. Ser162 carries the post-translational modification Phosphoserine. Thr166 carries the post-translational modification Phosphothreonine. 2 stretches are compositionally biased toward basic and acidic residues: residues 172 to 186 (ENVK…ERKS) and 194 to 209 (TVEK…KSAP). Low complexity predominate over residues 214-224 (ASLKKSASQKK). Residues 226 to 237 (AAKESKPKKVLL) are compositionally biased toward basic and acidic residues. A compositionally biased stretch (low complexity) spans 245-254 (ARPARGGRPN). Polar residues predominate over residues 263–277 (ETASKTQQAPPTLSE).

The protein belongs to the STM1 family. Associates with mature 80S ribosomes. Binds to the head domain of the 40S ribosomal subunit and prevents mRNA binding by inserting its alpha-helix domain towards the mRNA entry tunnel at the decoding site, where it blocks the binding of tRNA and mRNA at the A- and P-sites. Interacts with eEF2; interaction sequesters eEF2 at the A-site of the ribosome, thereby blocking the interaction sites of the mRNA-tRNA complex, promoting ribosome stabilization and hibernation. Interacts with sad1. Phosphorylation by TORC1 upon nutrient replenishment inhibits STM1 and causes its release from dormant ribosomes.

The protein resides in the cytoplasm. Functionally, ribosome preservation factor that protect a small pool of nontranslating, vacant ribosomes in cells under nutrient starvation conditions. Under nutrient-limiting conditions, cells reduce ribosome biogenesis and degrade ribosomes via autophagy (ribophagy) or proteasomal degradation. To avoid excessive degradation during starvation, STM1 binds to and protects 80S ribosomes from proteasomal degradation. Under nutrient-sufficient conditions, TORC1 phosphorylates and inhibits STM1 to prevent formation of dormant 80S ribosomes. Acts as an inhibitor of mRNA translation by promoting ribosome hibernation: clamps the two ribosomal subunits, thereby preventing their dissociation, and inhibits translation by excluding mRNA-binding. Acts via its association with eEF2, promoting ribosome stabilization and storage in an inactive state. May also repress translation by preventing association of eEF3 with ribosomes. Binds specifically G4 quadruplex (these are four-stranded right-handed helices, stabilized by guanine base quartets) and purine motif triplex (characterized by a third, antiparallel purine-rich DNA strand located within the major groove of a homopurine stretch of duplex DNA) nucleic acid structures. These structures may be present at telomeres or in rRNAs. Extends chronological lifespan when overexpressed. This Schizosaccharomyces pombe (strain 972 / ATCC 24843) (Fission yeast) protein is Ribosome-associated protein oga1.